The primary structure comprises 63 residues: Probable rubredoxin (63 aa).

The Rubredoxin-like domain occupies Met-11 to Leu-62. Positions 16, 19, 49, and 52 each coordinate Fe cation.

Belongs to the rubredoxin family. Fe(3+) is required as a cofactor.

Its function is as follows. Rubredoxin is a small nonheme, iron protein lacking acid-labile sulfide. Its single Fe, chelated to 4 Cys, functions as an electron acceptor and may also stabilize the conformation of the molecule. The chain is Probable rubredoxin from Methanothermobacter thermautotrophicus (strain ATCC 29096 / DSM 1053 / JCM 10044 / NBRC 100330 / Delta H) (Methanobacterium thermoautotrophicum).